Here is a 143-residue protein sequence, read N- to C-terminus: Nucleoside diphosphate kinase (143 aa).

6 residues coordinate ATP: Lys11, Phe59, Arg87, Thr93, Arg104, and Asn114. The active-site Pros-phosphohistidine intermediate is the His117.

The protein belongs to the NDK family. Homotetramer. The cofactor is Mg(2+).

Its subcellular location is the cytoplasm. It carries out the reaction a 2'-deoxyribonucleoside 5'-diphosphate + ATP = a 2'-deoxyribonucleoside 5'-triphosphate + ADP. It catalyses the reaction a ribonucleoside 5'-diphosphate + ATP = a ribonucleoside 5'-triphosphate + ADP. In terms of biological role, major role in the synthesis of nucleoside triphosphates other than ATP. The ATP gamma phosphate is transferred to the NDP beta phosphate via a ping-pong mechanism, using a phosphorylated active-site intermediate. The sequence is that of Nucleoside diphosphate kinase from Shigella boydii serotype 4 (strain Sb227).